A 118-amino-acid polypeptide reads, in one-letter code: Basic phospholipase A2 acanthin-2 (118 aa).

7 disulfides stabilise this stretch: C11-C71, C27-C117, C29-C45, C44-C98, C51-C91, C60-C84, and C78-C89. Residues Y28, G30, and G32 each contribute to the Ca(2+) site. The active site involves H48. A Ca(2+)-binding site is contributed by D49. Residue D92 is part of the active site.

The cofactor is Ca(2+). In terms of tissue distribution, expressed by the venom gland.

It is found in the secreted. The enzyme catalyses a 1,2-diacyl-sn-glycero-3-phosphocholine + H2O = a 1-acyl-sn-glycero-3-phosphocholine + a fatty acid + H(+). Functionally, snake venom phospholipase A2 (PLA2) that potently inhibits ADP-(IC(50)=12 nM) and collagen-induced (IC(50)=4 nM) platelet aggregation when tested on human whole blood. PLA2 catalyzes the calcium-dependent hydrolysis of the 2-acyl groups in 3-sn-phosphoglycerides. The sequence is that of Basic phospholipase A2 acanthin-2 from Acanthophis antarcticus (Common death adder).